We begin with the raw amino-acid sequence, 155 residues long: Small ribosomal subunit protein uS7cz/uS7cy (155 aa).

This sequence belongs to the universal ribosomal protein uS7 family. Part of the 30S ribosomal subunit.

It localises to the plastid. Its subcellular location is the chloroplast. In terms of biological role, one of the primary rRNA binding proteins, it binds directly to 16S rRNA where it nucleates assembly of the head domain of the 30S subunit. This Piper cenocladum (Ant piper) protein is Small ribosomal subunit protein uS7cz/uS7cy (rps7-A).